Here is a 727-residue protein sequence, read N- to C-terminus: Catalase-peroxidase (727 aa).

Positions 95 to 218 (WHSAGTYRII…LAAVQMGLIY (124 aa)) form a cross-link, tryptophyl-tyrosyl-methioninium (Trp-Tyr) (with M-244). The active-site Proton acceptor is the His96. Positions 218 to 244 (YVNPEGPNGEPDVLGAAKDIKESFGKM) form a cross-link, tryptophyl-tyrosyl-methioninium (Tyr-Met) (with W-95). His259 lines the heme b pocket.

Belongs to the peroxidase family. Peroxidase/catalase subfamily. In terms of assembly, homodimer or homotetramer. The cofactor is heme b. Formation of the three residue Trp-Tyr-Met cross-link is important for the catalase, but not the peroxidase activity of the enzyme.

It carries out the reaction H2O2 + AH2 = A + 2 H2O. The catalysed reaction is 2 H2O2 = O2 + 2 H2O. Functionally, bifunctional enzyme with both catalase and broad-spectrum peroxidase activity. This is Catalase-peroxidase from Persephonella marina (strain DSM 14350 / EX-H1).